Here is a 180-residue protein sequence, read N- to C-terminus: MTAVQSELISAIRSIPDYPKPGVMFRDITTLLGNPRAFRRAIDELVHPYAGTKVDKVAGIEARGFILGGAIAHQLSAGFIPIRKKGKLPHDTVRIAYSLEYGVDEMEMHRDAVAPGDKVILVDDLIATGGTAEGAAKLLKQMGADIVAACFIIDLPELGGRKKLEALGVNVRTLIEFEGH.

This sequence belongs to the purine/pyrimidine phosphoribosyltransferase family. In terms of assembly, homodimer.

It is found in the cytoplasm. It carries out the reaction AMP + diphosphate = 5-phospho-alpha-D-ribose 1-diphosphate + adenine. The protein operates within purine metabolism; AMP biosynthesis via salvage pathway; AMP from adenine: step 1/1. Catalyzes a salvage reaction resulting in the formation of AMP, that is energically less costly than de novo synthesis. In Rhizobium meliloti (strain 1021) (Ensifer meliloti), this protein is Adenine phosphoribosyltransferase.